Consider the following 1171-residue polypeptide: Phytochrome B (1171 aa).

The segment covering 1-19 (MASGSRATPTRSPSSARPA) has biased composition (low complexity). A disordered region spans residues 1 to 53 (MASGSRATPTRSPSSARPAAPRHQHHHSQSSGGSTSRAGGGGGGGGGGGGGAA). Residues 38 to 52 (AGGGGGGGGGGGGGA) are compositionally biased toward gly residues. Residues 259 to 442 (DVKLLCDTVV…AFGLQLNMEL (184 aa)) form the GAF domain. C364 is a phytochromobilin binding site. PAS domains lie at 661–732 (VARE…LRGD) and 795–866 (DYKA…MIVL). Residues 943 to 1161 (YIYQEIKNPL…FFHIVLELPQ (219 aa)) form the Histidine kinase domain.

This sequence belongs to the phytochrome family. As to quaternary structure, homodimer. Post-translationally, contains one covalently linked phytochromobilin chromophore.

Functionally, regulatory photoreceptor which exists in two forms that are reversibly interconvertible by light: the Pr form that absorbs maximally in the red region of the spectrum and the Pfr form that absorbs maximally in the far-red region. Photoconversion of Pr to Pfr induces an array of morphogenic responses, whereas reconversion of Pfr to Pr cancels the induction of those responses. Pfr controls the expression of a number of nuclear genes including those encoding the small subunit of ribulose-bisphosphate carboxylase, chlorophyll A/B binding protein, protochlorophyllide reductase, rRNA, etc. It also controls the expression of its own gene(s) in a negative feedback fashion. This is Phytochrome B (PHYB) from Oryza sativa subsp. japonica (Rice).